The primary structure comprises 464 residues: Sushi-repeat-containing protein SRPX (464 aa).

The signal sequence occupies residues 1-30 (MGSPGLRPELLLPQVLPLLLALLHVLPSQG). Ser34 carries O-linked (Xyl...) (chondroitin sulfate) serine glycosylation. 5 cysteine pairs are disulfide-bonded: Cys57-Cys85, Cys69-Cys103, Cys89-Cys115, Cys120-Cys161, and Cys147-Cys174. 2 Sushi domains span residues 57–117 (CSPI…ICKQ) and 118–176 (KRCP…SCVD). In terms of domain architecture, HYR spans 177-259 (LEPPRIKCPS…TCKFRVKVRV (83 aa)). The region spanning 260–319 (RRCGKLNAPENGYMKCSSDGDNYGATCEFSCIGGYELQGSPARVCQSNLAWSGTEPSCAA) is the Sushi 3 domain. 2 disulfides stabilise this stretch: Cys262-Cys304 and Cys290-Cys317.

This chain is Sushi-repeat-containing protein SRPX (Srpx), found in Mus musculus (Mouse).